A 287-amino-acid polypeptide reads, in one-letter code: NAD kinase (287 aa).

Asp70 functions as the Proton acceptor in the catalytic mechanism. NAD(+) is bound by residues 70 to 71 (DG), 144 to 145 (ND), Arg155, Lys172, Asp174, 185 to 190 (TAYSLS), and Gln244.

This sequence belongs to the NAD kinase family. A divalent metal cation is required as a cofactor.

The protein resides in the cytoplasm. It carries out the reaction NAD(+) + ATP = ADP + NADP(+) + H(+). Its function is as follows. Involved in the regulation of the intracellular balance of NAD and NADP, and is a key enzyme in the biosynthesis of NADP. Catalyzes specifically the phosphorylation on 2'-hydroxyl of the adenosine moiety of NAD to yield NADP. This chain is NAD kinase, found in Solibacter usitatus (strain Ellin6076).